A 381-amino-acid polypeptide reads, in one-letter code: MIISSANDYREAARRRVPPFMFHYADGGSFSERTLERNVTDLADLALRQRVLKDMSQLDTEIELFGEKLAMPAVLAPVGACGMYARRGEVQAAQAAENKGIPFTLSTVSICPIEEVTAAIKRPMWFQLYVLKDRGFMKHVLERAKAAGCSTLVFTVDMPTPGARYRDRHSGMSGDYKEIRRALQAVTHPFWAWDVGIKGKPHTLGNVSAYTGKAVGLDDYVVWLGENFDPSISWKDLEWIRDFWDGPMVIKGILDPEDAKDAVRFGADGIVVSNHGGRQLDGALSSARALPSIADAVKGDIKILADSGIRNGLDIVRMLALGADATMLGRAFVYALGAAGKAGVENMLDIFKKEMHVAMTLTSNQKISDITRDALVDLSKL.

The FMN hydroxy acid dehydrogenase domain maps to 1 to 380; it reads MIISSANDYR…TRDALVDLSK (380 aa). Residue Tyr24 coordinates substrate. 2 residues coordinate FMN: Ser106 and Gln127. Tyr129 contacts substrate. Position 155 (Thr155) interacts with FMN. Arg164 lines the substrate pocket. An FMN-binding site is contributed by Lys251. Catalysis depends on His275, which acts as the Proton acceptor. Arg278 provides a ligand contact to substrate. FMN is bound at residue 306 to 330; it reads DSGIRNGLDIVRMLALGADATMLGR.

This sequence belongs to the FMN-dependent alpha-hydroxy acid dehydrogenase family. FMN is required as a cofactor.

It is found in the cell inner membrane. The catalysed reaction is (S)-lactate + A = pyruvate + AH2. Catalyzes the conversion of L-lactate to pyruvate. Is coupled to the respiratory chain. This chain is L-lactate dehydrogenase, found in Actinobacillus pleuropneumoniae serotype 5b (strain L20).